A 210-amino-acid polypeptide reads, in one-letter code: Outer-membrane lipoprotein LolB (210 aa).

A signal peptide spans 1–29 (MSLISNNEERSLRVRYCIAIALSALLISG). A lipid anchor (N-palmitoyl cysteine) is attached at Cys30. Residue Cys30 is the site of S-diacylglycerol cysteine attachment.

Belongs to the LolB family. In terms of assembly, monomer.

It localises to the cell outer membrane. Plays a critical role in the incorporation of lipoproteins in the outer membrane after they are released by the LolA protein. This is Outer-membrane lipoprotein LolB from Coxiella burnetii (strain CbuG_Q212) (Coxiella burnetii (strain Q212)).